Reading from the N-terminus, the 303-residue chain is Bifunctional protein FolD (303 aa).

Residues 175-177 and I243 each bind NADP(+); that span reads GVS.

The protein belongs to the tetrahydrofolate dehydrogenase/cyclohydrolase family. Homodimer.

The catalysed reaction is (6R)-5,10-methylene-5,6,7,8-tetrahydrofolate + NADP(+) = (6R)-5,10-methenyltetrahydrofolate + NADPH. The enzyme catalyses (6R)-5,10-methenyltetrahydrofolate + H2O = (6R)-10-formyltetrahydrofolate + H(+). It participates in one-carbon metabolism; tetrahydrofolate interconversion. Functionally, catalyzes the oxidation of 5,10-methylenetetrahydrofolate to 5,10-methenyltetrahydrofolate and then the hydrolysis of 5,10-methenyltetrahydrofolate to 10-formyltetrahydrofolate. In Xanthomonas euvesicatoria pv. vesicatoria (strain 85-10) (Xanthomonas campestris pv. vesicatoria), this protein is Bifunctional protein FolD.